The primary structure comprises 61 residues: Large ribosomal subunit protein bL28A (61 aa).

The protein belongs to the bacterial ribosomal protein bL28 family.

The polypeptide is Large ribosomal subunit protein bL28A (rpmB1) (Streptomyces coelicolor (strain ATCC BAA-471 / A3(2) / M145)).